We begin with the raw amino-acid sequence, 688 residues long: MRDPAFPGAAMAYHPFHAPRAADFPMSAFLAAAQPSFFPALTLPPAALGKPLSDASLAGAAEAGLHLSALGHHHQAAHLRSLKSLEPEEEVEDDPKVNLEAKELWDQFHKIGTEMVITKSGRRMFPPFKVRVSGLDKKAKYILLMDIVAADDCRYKFHNSRWMVAGKADPEMPKRMYIHPDSPATGEQWMAKPVAFHKLKLTNNISDKHGFTILNSMHKYQPRFHIVRANDILKLPYSTFRTYVFPETDFIAVTAYQNDKITQLKIDNNPFAKGFRDTGNGRREKRKQLSLPSLRMYEEQCKADRDGAESDASSCDPAPGRDSLHSPLSAEPSPLRLHRNNREEKFGADSDQELDRREIRSARSHSPVGHRSPPSSPRLEDRGKDKSTPEKKSDSPESRKDGSDSLFSSIRSLEKDKAESRRKEDSKSDPECGSLSKETFAPLMVQTDSPPHLSASHLQSLALSGLHGQQFFNPLNAGQPLFIHPGQFTMGPGAFSAMGMGHLLASMTGAGALDNGSLSSVQGATGAANPFPFHFSQHMLASQGIPMPAFGGLFPYPYTYMAAAAAAASAMPATSAATTMPRNPFLSSTRPRLRFNPYQIPVGIPPSTNLLTTGLPGSLNPGSESSKPGSSRESSPIPDTPVPKRSHSNSLSPKASMKDSINELQNIQRLVSGLESQREISPGRETPK.

A DNA-binding region (T-box) is located at residues 104 to 277 (LWDQFHKIGT…NNPFAKGFRD (174 aa)). 2 disordered regions span residues 301 to 436 (CKAD…GSLS) and 606 to 688 (PSTN…ETPK). Basic and acidic residues-rich tracts occupy residues 340–361 (NNRE…EIRS), 378–403 (RLED…KDGS), and 412–430 (SLEK…KSDP). Positions 621-636 (PGSESSKPGSSRESSP) are enriched in low complexity. A coiled-coil region spans residues 655–679 (ASMKDSINELQNIQRLVSGLESQRE). Basic and acidic residues predominate over residues 676–688 (SQREISPGRETPK).

Binds DNA as a monomer.

Its subcellular location is the nucleus. Functionally, transcription factor which acts as a transcriptional repressor. May also function as a transcriptional activator. Binds to the palindromic T site 5'-TTCACACCTAGGTGTGAA-3' DNA sequence, or a half-site, which are present in the regulatory region of several genes. This chain is T-box transcription factor TBX2-A (tbx2-a), found in Xenopus laevis (African clawed frog).